The chain runs to 392 residues: Phospho-N-acetylmuramoyl-pentapeptide-transferase (392 aa).

Transmembrane regions (helical) follow at residues 24 to 44, 76 to 96, 100 to 120, 137 to 157, 167 to 187, 193 to 213, 225 to 245, 262 to 282, 289 to 309, 314 to 334, and 369 to 389; these read YLTLRAVMAALTALLIGLIAG, TMGGVLILGSIAISTLLWFDL, FVWIVLAVTLGFGAIGWVDDW, YFWQSVIGLLAALYLVFSISE, FITWVQSGFLMDLPPKAGLLV, VSYPLGVLGFVILTYLVIVGS, GLAIMPVIMVGASLGIFAYVT, SGELLIFCAAMAGAGLAFLWF, VFMGDVGALALGAALGTIAVI, IVLAIMGGIFVVEALSVMLQV, and QVVVRFWIITMLLCLVGLTTL.

The protein belongs to the glycosyltransferase 4 family. MraY subfamily. Requires Mg(2+) as cofactor.

The protein localises to the cell inner membrane. The catalysed reaction is UDP-N-acetyl-alpha-D-muramoyl-L-alanyl-gamma-D-glutamyl-meso-2,6-diaminopimeloyl-D-alanyl-D-alanine + di-trans,octa-cis-undecaprenyl phosphate = di-trans,octa-cis-undecaprenyl diphospho-N-acetyl-alpha-D-muramoyl-L-alanyl-D-glutamyl-meso-2,6-diaminopimeloyl-D-alanyl-D-alanine + UMP. The protein operates within cell wall biogenesis; peptidoglycan biosynthesis. Catalyzes the initial step of the lipid cycle reactions in the biosynthesis of the cell wall peptidoglycan: transfers peptidoglycan precursor phospho-MurNAc-pentapeptide from UDP-MurNAc-pentapeptide onto the lipid carrier undecaprenyl phosphate, yielding undecaprenyl-pyrophosphoryl-MurNAc-pentapeptide, known as lipid I. The chain is Phospho-N-acetylmuramoyl-pentapeptide-transferase from Acidovorax ebreus (strain TPSY) (Diaphorobacter sp. (strain TPSY)).